A 313-amino-acid polypeptide reads, in one-letter code: Malate dehydrogenase (313 aa).

Residues 11–16 (GSGNIG) and aspartate 35 each bind NAD(+). Residues arginine 84 and arginine 90 each contribute to the substrate site. NAD(+)-binding positions include asparagine 97 and 120–122 (VTN). Substrate is bound by residues asparagine 122 and arginine 153. The active-site Proton acceptor is histidine 177.

This sequence belongs to the LDH/MDH superfamily. MDH type 3 family.

The enzyme catalyses (S)-malate + NAD(+) = oxaloacetate + NADH + H(+). Catalyzes the reversible oxidation of malate to oxaloacetate. The chain is Malate dehydrogenase from Ehrlichia ruminantium (strain Welgevonden).